Consider the following 662-residue polypeptide: Fructose-1,6-bisphosphatase class 3 (662 aa).

The protein belongs to the FBPase class 3 family. The cofactor is Mn(2+).

It catalyses the reaction beta-D-fructose 1,6-bisphosphate + H2O = beta-D-fructose 6-phosphate + phosphate. The protein operates within carbohydrate biosynthesis; gluconeogenesis. The protein is Fructose-1,6-bisphosphatase class 3 of Clostridium tetani (strain Massachusetts / E88).